Here is a 474-residue protein sequence, read N- to C-terminus: Catalase (474 aa).

Active-site residues include His52 and Asn124. Heme is bound at residue Tyr334.

The protein belongs to the catalase family. Heme serves as cofactor.

The enzyme catalyses 2 H2O2 = O2 + 2 H2O. In terms of biological role, decomposes hydrogen peroxide into water and oxygen; serves to protect cells from the toxic effects of hydrogen peroxide. The polypeptide is Catalase (katA) (Campylobacter jejuni subsp. jejuni serotype O:2 (strain ATCC 700819 / NCTC 11168)).